A 231-amino-acid chain; its full sequence is Dephospho-CoA kinase domain-containing protein (231 aa).

The region spanning 3-207 is the DPCK domain; the sequence is LVGLTGGIAS…RSMEYLPLRL (205 aa). 8 to 15 contributes to the ATP binding site; sequence GGIASGKS.

It belongs to the CoaE family.

The sequence is that of Dephospho-CoA kinase domain-containing protein (Dcakd) from Mus musculus (Mouse).